A 201-amino-acid chain; its full sequence is Large ribosomal subunit protein uL4 (201 aa).

Positions 45–71 (AQKTRAEVTGSGKKPWRQKGTGRARAG) are disordered.

Belongs to the universal ribosomal protein uL4 family. Part of the 50S ribosomal subunit.

One of the primary rRNA binding proteins, this protein initially binds near the 5'-end of the 23S rRNA. It is important during the early stages of 50S assembly. It makes multiple contacts with different domains of the 23S rRNA in the assembled 50S subunit and ribosome. In terms of biological role, forms part of the polypeptide exit tunnel. The protein is Large ribosomal subunit protein uL4 of Shewanella pealeana (strain ATCC 700345 / ANG-SQ1).